The following is a 289-amino-acid chain: Protoheme IX farnesyltransferase (289 aa).

The next 9 helical transmembrane spans lie at 9–29 (VALM…PVMM), 40–60 (LIAV…TINC), 89–109 (LTFG…LVNW), 110–130 (PSAL…TLGL), 134–154 (TPSN…IGWS), 155–175 (AVTG…FFWT), 190–209 (YAAA…VVTR), 228–248 (VAST…WFLV), and 269–289 (FHMS…TALV).

The protein belongs to the UbiA prenyltransferase family. Protoheme IX farnesyltransferase subfamily.

It localises to the cell membrane. The catalysed reaction is heme b + (2E,6E)-farnesyl diphosphate + H2O = Fe(II)-heme o + diphosphate. It functions in the pathway porphyrin-containing compound metabolism; heme O biosynthesis; heme O from protoheme: step 1/1. Functionally, converts heme B (protoheme IX) to heme O by substitution of the vinyl group on carbon 2 of heme B porphyrin ring with a hydroxyethyl farnesyl side group. The sequence is that of Protoheme IX farnesyltransferase from Frankia casuarinae (strain DSM 45818 / CECT 9043 / HFP020203 / CcI3).